The sequence spans 312 residues: MIFDGFIKNLIYDPVSTLGILIFYFLLINLPISLLALFNKKSSSFVRFFTILINLFIALQLIFRWILSGHFPISNLYESLYFLVWGISLGQLLVEKEYPNPIIPVIAIPIELLTIAFACFVLPDDLKLSSNLVPALRSSWLIMHVSVVMLSYAALIIGSLLSASVLFINNRQPLQLRSSSTGIGGFRMSNEYSGNNFNEPINFTHTEELDTLSYRSILVGFVLLTLGLITGAIWANEAWGTWWSWDPKETWAFISWLFYAAYLHMRISRGWQGRRPALFATSGFFVVLICYLGVNFLGIGLHSYGWIFGILN.

The next 8 helical transmembrane spans lie at Leu18–Phe38, Phe48–Ser68, Ile73–Leu93, Ile102–Leu122, Val148–Ile168, Ser216–Asn236, Thr250–Ile267, and Phe279–Ile299.

This sequence belongs to the CcmF/CycK/Ccl1/NrfE/CcsA family. As to quaternary structure, may interact with ccs1.

The protein localises to the cellular thylakoid membrane. In terms of biological role, required during biogenesis of c-type cytochromes (cytochrome c6 and cytochrome f) at the step of heme attachment. This Prochlorococcus marinus (strain MIT 9515) protein is Cytochrome c biogenesis protein CcsA.